Here is a 469-residue protein sequence, read N- to C-terminus: Phenolic glucoside malonyltransferase 1 (469 aa).

The residue at position 1 (M1) is an N-acetylmethionine. H169 functions as the Proton acceptor in the catalytic mechanism. The short motif at 169-173 (HAVLD) is the HXXXD motif element. 291–292 (ST) contacts malonyl-CoA. D413 (proton acceptor) is an active-site residue. The short motif at 413-417 (DFGWG) is the DFGWG motif element.

Belongs to the plant acyltransferase family. Phenolic glucoside malonyltransferase subfamily.

It carries out the reaction a flavonol 3-O-beta-D-glucoside + malonyl-CoA = a flavonol 3-O-(6-O-malonyl-beta-D-glucoside) + CoA. The enzyme catalyses a flavonol 7-O-beta-D-glucoside + malonyl-CoA = a flavonol 7-O-(6-O-malonyl-beta-D-glucoside) + CoA. In terms of biological role, malonyltransferase acting on xenobiotic glucosides. Has activity toward 2-Naphthol glucoside (2NAG), 1-Naphthol glucoside (1NAG), kaempferol 7-O-glucoside, kaempferol 3-O-glucoside, hydroxycoumarin glucosides, phenol-glucosides and isoflavone glucoside (daidzin), but not toward 4-coumaroyl glucoside, kaempferol 3,7-O-diglucoside, salicylic acid glucoside and phlorizin. In vivo, seems to be involved in the malonylation of 2-Naphthol glucoside while PMAT2 would be involved in the malonylation of 4-methylumbelliferone glucoside or 4-nitrophenyl glucoside. This chain is Phenolic glucoside malonyltransferase 1 (PMAT1), found in Arabidopsis thaliana (Mouse-ear cress).